Here is a 469-residue protein sequence, read N- to C-terminus: Biotin synthase (469 aa).

The Radical SAM core domain maps to 51–278; sequence MTVKVNYLVN…DKEIRMAGGR (228 aa). The [4Fe-4S] cluster site is built by cysteine 66, cysteine 70, and cysteine 73. [2Fe-2S] cluster is bound by residues cysteine 110, cysteine 143, cysteine 203, and arginine 273. A disordered region spans residues 326 to 469; it reads AGPDPSRDRH…GAGTSVAPNA (144 aa). 2 stretches are compositionally biased toward low complexity: residues 363-384 and 405-428; these read GSAAGSSSGDGSAPDGGRAPAD and AGGPARTRSAAASSAPTGAGMSPA.

It belongs to the radical SAM superfamily. Biotin synthase family. Homodimer. [4Fe-4S] cluster is required as a cofactor. Requires [2Fe-2S] cluster as cofactor.

The enzyme catalyses (4R,5S)-dethiobiotin + (sulfur carrier)-SH + 2 reduced [2Fe-2S]-[ferredoxin] + 2 S-adenosyl-L-methionine = (sulfur carrier)-H + biotin + 2 5'-deoxyadenosine + 2 L-methionine + 2 oxidized [2Fe-2S]-[ferredoxin]. It functions in the pathway cofactor biosynthesis; biotin biosynthesis; biotin from 7,8-diaminononanoate: step 2/2. Its function is as follows. Catalyzes the conversion of dethiobiotin (DTB) to biotin by the insertion of a sulfur atom into dethiobiotin via a radical-based mechanism. This Kocuria rhizophila (strain ATCC 9341 / DSM 348 / NBRC 103217 / DC2201) protein is Biotin synthase.